Here is a 574-residue protein sequence, read N- to C-terminus: uncharacterized protein (574 aa).

The next 11 membrane-spanning stretches (helical) occupy residues 14-34 (FFPT…LFFG), 54-74 (VVPL…LGIV), 124-144 (WLMA…SDTA), 205-225 (ICKC…TGTI), 253-273 (SWMA…WFIV), 323-343 (LVIF…VIPG), 350-370 (KGYV…FIWP), 403-423 (FPWS…AVRV), 441-461 (MPFF…TEFS), 485-505 (PLYF…LPMA), and 520-540 (MIDM…ITAI). N565 and N569 each carry an N-linked (GlcNAc...) asparagine glycan.

The protein belongs to the SLC13A/DASS transporter (TC 2.A.47) family. NADC subfamily.

The protein resides in the membrane. This is an uncharacterized protein from Caenorhabditis elegans.